Here is a 264-residue protein sequence, read N- to C-terminus: Thymidylate synthase (264 aa).

Residue R21 participates in dUMP binding. H51 is a binding site for (6R)-5,10-methylene-5,6,7,8-tetrahydrofolate. Residue R126–R127 coordinates dUMP. Catalysis depends on C146, which acts as the Nucleophile. DUMP is bound by residues R166 to D169, N177, and H207 to Y209. D169 serves as a coordination point for (6R)-5,10-methylene-5,6,7,8-tetrahydrofolate. Position 263 (A263) interacts with (6R)-5,10-methylene-5,6,7,8-tetrahydrofolate.

The protein belongs to the thymidylate synthase family. Bacterial-type ThyA subfamily. As to quaternary structure, homodimer.

Its subcellular location is the cytoplasm. The catalysed reaction is dUMP + (6R)-5,10-methylene-5,6,7,8-tetrahydrofolate = 7,8-dihydrofolate + dTMP. It participates in pyrimidine metabolism; dTTP biosynthesis. Catalyzes the reductive methylation of 2'-deoxyuridine-5'-monophosphate (dUMP) to 2'-deoxythymidine-5'-monophosphate (dTMP) while utilizing 5,10-methylenetetrahydrofolate (mTHF) as the methyl donor and reductant in the reaction, yielding dihydrofolate (DHF) as a by-product. This enzymatic reaction provides an intracellular de novo source of dTMP, an essential precursor for DNA biosynthesis. The chain is Thymidylate synthase from Aromatoleum aromaticum (strain DSM 19018 / LMG 30748 / EbN1) (Azoarcus sp. (strain EbN1)).